A 237-amino-acid polypeptide reads, in one-letter code: Large ribosomal subunit protein uL2 (237 aa).

Residues 1 to 11 (MGKRLISQNRG) are compositionally biased toward polar residues. Disordered regions lie at residues 1-26 (MGKR…KRKG) and 204-237 (PYGG…SRRT). Composition is skewed to basic residues over residues 13–26 (GTPK…KRKG) and 228–237 (KVGHIASRRT).

It belongs to the universal ribosomal protein uL2 family. Part of the 50S ribosomal subunit. Forms a bridge to the 30S subunit in the 70S ribosome.

In terms of biological role, one of the primary rRNA binding proteins. Required for association of the 30S and 50S subunits to form the 70S ribosome, for tRNA binding and peptide bond formation. It has been suggested to have peptidyltransferase activity; this is somewhat controversial. Makes several contacts with the 16S rRNA in the 70S ribosome. The polypeptide is Large ribosomal subunit protein uL2 (Methanococcus vannielii).